Consider the following 624-residue polypeptide: tRNA uridine 5-carboxymethylaminomethyl modification enzyme MnmG (624 aa).

14 to 19 lines the FAD pocket; sequence GAGHAG. 273–287 serves as a coordination point for NAD(+); the sequence is GTRYCPSFEDKVVRF.

This sequence belongs to the MnmG family. Homodimer. Heterotetramer of two MnmE and two MnmG subunits. FAD serves as cofactor.

Its subcellular location is the cytoplasm. Its function is as follows. NAD-binding protein involved in the addition of a carboxymethylaminomethyl (cmnm) group at the wobble position (U34) of certain tRNAs, forming tRNA-cmnm(5)s(2)U34. This is tRNA uridine 5-carboxymethylaminomethyl modification enzyme MnmG from Syntrophomonas wolfei subsp. wolfei (strain DSM 2245B / Goettingen).